A 610-amino-acid polypeptide reads, in one-letter code: Elongation factor 4 (610 aa).

Positions 13 to 195 constitute a tr-type G domain; sequence SHIRNFSIVA…AIVRKLPAPK (183 aa). GTP contacts are provided by residues 25 to 30 and 142 to 145; these read DHGKST and NKID.

This sequence belongs to the TRAFAC class translation factor GTPase superfamily. Classic translation factor GTPase family. LepA subfamily.

It is found in the cell inner membrane. It catalyses the reaction GTP + H2O = GDP + phosphate + H(+). Its function is as follows. Required for accurate and efficient protein synthesis under certain stress conditions. May act as a fidelity factor of the translation reaction, by catalyzing a one-codon backward translocation of tRNAs on improperly translocated ribosomes. Back-translocation proceeds from a post-translocation (POST) complex to a pre-translocation (PRE) complex, thus giving elongation factor G a second chance to translocate the tRNAs correctly. Binds to ribosomes in a GTP-dependent manner. This is Elongation factor 4 from Rhizobium etli (strain CIAT 652).